The primary structure comprises 403 residues: Argininosuccinate synthase (403 aa).

Residues 13 to 21 (AYSGGLDTS) and alanine 40 contribute to the ATP site. Residues tyrosine 91 and serine 96 each contribute to the L-citrulline site. Glycine 121 serves as a coordination point for ATP. Residues threonine 123, asparagine 127, and aspartate 128 each contribute to the L-aspartate site. Residue asparagine 127 participates in L-citrulline binding. Residues arginine 131, serine 180, serine 189, glutamate 265, and tyrosine 277 each contribute to the L-citrulline site.

The protein belongs to the argininosuccinate synthase family. Type 1 subfamily. As to quaternary structure, homotetramer.

It localises to the cytoplasm. The catalysed reaction is L-citrulline + L-aspartate + ATP = 2-(N(omega)-L-arginino)succinate + AMP + diphosphate + H(+). The protein operates within amino-acid biosynthesis; L-arginine biosynthesis; L-arginine from L-ornithine and carbamoyl phosphate: step 2/3. The protein is Argininosuccinate synthase of Leptospira interrogans serogroup Icterohaemorrhagiae serovar copenhageni (strain Fiocruz L1-130).